Consider the following 141-residue polypeptide: Drosulfakinins (141 aa).

The N-terminal stretch at 1-33 (MGLRSCTHLATLFMTLWALAFCFLVVVPIPAQT) is a signal peptide. A propeptide spanning residues 34-73 (TSLQNAKDDRRLQELESKIGAESDQPNANLVGPSFSRFGD) is cleaved from the precursor. Positions 51–72 (KIGAESDQPNANLVGPSFSRFG) are disordered. F82 carries the phenylalanine amide modification. Positions 86-111 (VPLISRPMIPIELDLLMDNDDERTKA) are excised as a propeptide. A Sulfotyrosine modification is found at Y117. F122 carries the post-translational modification Phenylalanine amide. At Y134 the chain carries Sulfotyrosine. Position 139 is a phenylalanine amide (F139).

Belongs to the gastrin/cholecystokinin family.

It is found in the secreted. In terms of biological role, drosulfakinin-0 (DSK 0) plays diverse biological roles including regulating gut muscle contraction in adults but not in larvae. The chain is Drosulfakinins from Drosophila mauritiana (Fruit fly).